We begin with the raw amino-acid sequence, 370 residues long: Cyanuric acid amidohydrolase (370 aa).

The RU A stretch occupies residues 1–106 (MRTTSVGVFK…TVFTRREVER (106 aa)). Substrate-binding positions include R54 and 85–86 (SG). An RU B region spans residues 115-251 (RLSIGMAHTR…NVVIVLGNSA (137 aa)). Residue K165 is part of the active site. Substrate is bound by residues R197 and 234–235 (SA). The active-site Nucleophile is S234. The tract at residues 257–370 (FEIGHAVMND…PVAVIARLSD (114 aa)) is RU C. A Mg(2+)-binding site is contributed by E302. Substrate-binding positions include R329 and 348–349 (SG). Positions 351, 354, 355, 356, and 359 each coordinate Mg(2+).

Belongs to the cyclic amide hydrolase (CyAH) family. As to quaternary structure, homotetramer.

The catalysed reaction is cyanurate + H2O = 1-carboxybiuret + H(+). Its pathway is xenobiotic degradation; atrazine degradation; biuret from cyanurate: step 1/1. Its activity is regulated as follows. Inhibited by barbituric acid. Functionally, responsible for the hydrolysis of cyanuric acid, an intermediate formed during catabolism of s-triazine based compounds in herbicides such as atrazine and polymers such as melamine. Catalyzes the hydrolytic opening of the s-triazine ring of cyanuric acid (2,4,6-trihydroxy-s-triazine) to yield carbon dioxide and carboxybiuret, which spontaneously decarboxylates to biuret. This is Cyanuric acid amidohydrolase from Bradyrhizobium diazoefficiens (strain JCM 10833 / BCRC 13528 / IAM 13628 / NBRC 14792 / USDA 110).